We begin with the raw amino-acid sequence, 470 residues long: GTPase Der (470 aa).

EngA-type G domains are found at residues 2–165 and 201–372; these read KTIA…GLEA and IRVG…ENFS. Residues 8 to 15, 55 to 59, 117 to 120, 207 to 214, 254 to 258, and 318 to 321 contribute to the GTP site; these read GKPNVGKS, DTGGI, NKID, GKVNVGKS, DTAGI, and NKWD. In terms of domain architecture, KH-like spans 373–457; that stretch reads RRIPTSILNK…PILIRARKRG (85 aa).

The protein belongs to the TRAFAC class TrmE-Era-EngA-EngB-Septin-like GTPase superfamily. EngA (Der) GTPase family. Associates with the 50S ribosomal subunit.

In terms of biological role, GTPase that plays an essential role in the late steps of ribosome biogenesis. This is GTPase Der from Wolinella succinogenes (strain ATCC 29543 / DSM 1740 / CCUG 13145 / JCM 31913 / LMG 7466 / NCTC 11488 / FDC 602W) (Vibrio succinogenes).